The sequence spans 303 residues: Coenzyme PQQ synthesis protein B (303 aa).

The protein belongs to the PqqB family.

The protein operates within cofactor biosynthesis; pyrroloquinoline quinone biosynthesis. May be involved in the transport of PQQ or its precursor to the periplasm. The sequence is that of Coenzyme PQQ synthesis protein B from Pseudomonas putida (strain W619).